Here is a 443-residue protein sequence, read N- to C-terminus: Autophagy-related protein 13 homolog (443 aa).

Disordered stretches follow at residues 232 to 283 (AKKR…EEDH) and 308 to 333 (ANGTKKNSSSTCLNSPKSTPEDKEPT). Positions 240–253 (SVESATSAGSSTSR) are enriched in polar residues. Basic and acidic residues predominate over residues 268-283 (EDSRHSDVQNSYEEDH). Polar residues predominate over residues 308–325 (ANGTKKNSSSTCLNSPKS).

The protein belongs to the ATG13 family. Metazoan subfamily. As to quaternary structure, interacts with unc-51 (via C-terminus). Interacts with lgg-1; the interaction is direct.

Its subcellular location is the cytoplasm. It is found in the cytosol. The protein localises to the preautophagosomal structure. The protein resides in the perikaryon. It localises to the cell projection. Its subcellular location is the axon. Component of the unc-51/atg-13 complex required for autophagosome formation. Required for the degradation of germ cell specific P-granule components such as sepa-1 by autophagy in somatic cells. This ensures exclusive localization of the P-granules in germ cells. May function downstream of the let-363 (Tor) signaling pathway to mediate sepa-1 degradation. Plays a role in survival during limited food availability. The sequence is that of Autophagy-related protein 13 homolog from Caenorhabditis elegans.